Reading from the N-terminus, the 365-residue chain is Alanine racemase (365 aa).

K32 (proton acceptor; specific for D-alanine) is an active-site residue. Residue K32 is modified to N6-(pyridoxal phosphate)lysine. Residue R128 coordinates substrate. Y257 (proton acceptor; specific for L-alanine) is an active-site residue. A substrate-binding site is contributed by M305.

This sequence belongs to the alanine racemase family. Requires pyridoxal 5'-phosphate as cofactor.

It catalyses the reaction L-alanine = D-alanine. Its pathway is amino-acid biosynthesis; D-alanine biosynthesis; D-alanine from L-alanine: step 1/1. Catalyzes the interconversion of L-alanine and D-alanine. May also act on other amino acids. This Francisella tularensis subsp. holarctica (strain LVS) protein is Alanine racemase (alr).